Reading from the N-terminus, the 399-residue chain is Phosphoglycerate kinase (399 aa).

Substrate-binding positions include 22 to 24 (DFN), Arg-38, 61 to 64 (HLGR), Arg-120, and Arg-153. Residues Lys-206, Gly-297, Glu-328, and 354-357 (GGDT) each bind ATP.

The protein belongs to the phosphoglycerate kinase family. In terms of assembly, monomer.

The protein localises to the cytoplasm. It carries out the reaction (2R)-3-phosphoglycerate + ATP = (2R)-3-phospho-glyceroyl phosphate + ADP. It functions in the pathway carbohydrate degradation; glycolysis; pyruvate from D-glyceraldehyde 3-phosphate: step 2/5. The chain is Phosphoglycerate kinase from Campylobacter concisus (strain 13826).